A 172-amino-acid chain; its full sequence is NADH-ubiquinone oxidoreductase chain 6 (172 aa).

The next 6 membrane-spanning stretches (helical) occupy residues 1–21 (MLSL…VVVL), 25–45 (PYFS…IVLY), 48–68 (GTFL…VVFV), 86–106 (VIWF…MSFN), 108–128 (FFLD…IFGA), and 141–161 (LILV…LVVV).

This sequence belongs to the complex I subunit 6 family.

The protein localises to the mitochondrion membrane. The enzyme catalyses a ubiquinone + NADH + 5 H(+)(in) = a ubiquinol + NAD(+) + 4 H(+)(out). Core subunit of the mitochondrial membrane respiratory chain NADH dehydrogenase (Complex I) that is believed to belong to the minimal assembly required for catalysis. Complex I functions in the transfer of electrons from NADH to the respiratory chain. The immediate electron acceptor for the enzyme is believed to be ubiquinone. The chain is NADH-ubiquinone oxidoreductase chain 6 (MT-ND6) from Petromyzon marinus (Sea lamprey).